Here is a 434-residue protein sequence, read N- to C-terminus: Phosphomethylpyrimidine synthase 2 (434 aa).

Substrate contacts are provided by residues Met94, Tyr123, His162, 184–186, 225–228, and Glu264; these read SRG and NAMR. Zn(2+) is bound at residue His268. Tyr291 contributes to the substrate binding site. His332 contributes to the Zn(2+) binding site. The [4Fe-4S] cluster site is built by Cys408, Cys411, and Cys415.

Belongs to the ThiC family. The cofactor is [4Fe-4S] cluster.

It catalyses the reaction 5-amino-1-(5-phospho-beta-D-ribosyl)imidazole + S-adenosyl-L-methionine = 4-amino-2-methyl-5-(phosphooxymethyl)pyrimidine + CO + 5'-deoxyadenosine + formate + L-methionine + 3 H(+). It participates in cofactor biosynthesis; thiamine diphosphate biosynthesis. Its function is as follows. Catalyzes the synthesis of the hydroxymethylpyrimidine phosphate (HMP-P) moiety of thiamine from aminoimidazole ribotide (AIR) in a radical S-adenosyl-L-methionine (SAM)-dependent reaction. This is Phosphomethylpyrimidine synthase 2 from Methanosphaera stadtmanae (strain ATCC 43021 / DSM 3091 / JCM 11832 / MCB-3).